We begin with the raw amino-acid sequence, 104 residues long: Gallinacin-11 (104 aa).

The first 22 residues, M1–G22, serve as a signal peptide directing secretion. Disulfide bonds link C30-C60, C37-C53, and C43-C61.

Belongs to the beta-defensin family. In terms of tissue distribution, detected in outer membrane of the vitelline layer of the egg (at protein level). Expressed in the liver, gall bladder, kidney, testis, ovary and male and female reproductive tracts. Expressed in the ovarian stroma, but not in the ovarian follicles. No expression is detected in bone marrow.

It is found in the secreted. The protein localises to the cytoplasmic granule. In terms of biological role, has bactericidal activity. This is Gallinacin-11 (GAL11) from Gallus gallus (Chicken).